The chain runs to 94 residues: Scorpine-like-1 (94 aa).

Positions 1 to 18 are cleaved as a signal peptide; that stretch reads MNTKFTVLIFLGVIVVSY. A BetaSPN-type CS-alpha/beta domain is found at 54-94; sequence EYGCMMDISWNKDCQRHCQSTEQKDGICHGMKCKCGKPRSY. 3 disulfide bridges follow: Cys-57–Cys-81, Cys-67–Cys-86, and Cys-71–Cys-88.

Belongs to the long chain scorpion toxin family. Class 3 subfamily. Expressed by the venom gland.

Its subcellular location is the secreted. Functionally, has antibacterial activity. This chain is Scorpine-like-1, found in Urodacus yaschenkoi (Inland robust scorpion).